The chain runs to 100 residues: UPF0213 protein YhbQ (100 aa).

A GIY-YIG domain is found at 2-77 (TPWFLYLIRT…KQLTKRQKER (76 aa)).

This sequence belongs to the UPF0213 family.

The chain is UPF0213 protein YhbQ from Escherichia coli O157:H7.